A 380-amino-acid chain; its full sequence is Cytochrome b (380 aa).

Transmembrane regions (helical) follow at residues 33–53 (FGSL…FLAM), 77–98 (WLIR…FIHV), 113–133 (WNIG…GYVL), and 178–198 (FFAF…VHLL). Residues histidine 83 and histidine 97 each coordinate heme b. Histidine 182 and histidine 196 together coordinate heme b. Histidine 201 is a binding site for a ubiquinone. The next 4 membrane-spanning stretches (helical) occupy residues 226-246 (IKDL…VLFF), 288-308 (LGGV…PFLN), 320-340 (ITQF…WIGG), and 347-367 (FTTI…VLMP).

It belongs to the cytochrome b family. In terms of assembly, the cytochrome bc1 complex contains 11 subunits: 3 respiratory subunits (MT-CYB, CYC1 and UQCRFS1), 2 core proteins (UQCRC1 and UQCRC2) and 6 low-molecular weight proteins (UQCRH/QCR6, UQCRB/QCR7, UQCRQ/QCR8, UQCR10/QCR9, UQCR11/QCR10 and a cleavage product of UQCRFS1). This cytochrome bc1 complex then forms a dimer. Heme b serves as cofactor.

Its subcellular location is the mitochondrion inner membrane. Its function is as follows. Component of the ubiquinol-cytochrome c reductase complex (complex III or cytochrome b-c1 complex) that is part of the mitochondrial respiratory chain. The b-c1 complex mediates electron transfer from ubiquinol to cytochrome c. Contributes to the generation of a proton gradient across the mitochondrial membrane that is then used for ATP synthesis. In Thomasomys ischyrus (Strong-tailed oldfield mouse), this protein is Cytochrome b (MT-CYB).